Reading from the N-terminus, the 732-residue chain is Phosphoribosylformylglycinamidine synthase subunit PurL (732 aa).

His-42 is an active-site residue. Positions 45 and 84 each coordinate ATP. Glu-86 serves as a coordination point for Mg(2+). Residues Ser-87–His-90 and Arg-109 contribute to the substrate site. Catalysis depends on His-88, which acts as the Proton acceptor. Asp-110 contributes to the Mg(2+) binding site. Position 238 (Gln-238) interacts with substrate. Asp-266 provides a ligand contact to Mg(2+). Residue Glu-310–Gln-312 coordinates substrate. ATP is bound by residues Asp-496 and Gly-533. Asn-534 is a Mg(2+) binding site. Ser-536 provides a ligand contact to substrate.

It belongs to the FGAMS family. Monomer. Part of the FGAM synthase complex composed of 1 PurL, 1 PurQ and 2 PurS subunits.

It localises to the cytoplasm. It carries out the reaction N(2)-formyl-N(1)-(5-phospho-beta-D-ribosyl)glycinamide + L-glutamine + ATP + H2O = 2-formamido-N(1)-(5-O-phospho-beta-D-ribosyl)acetamidine + L-glutamate + ADP + phosphate + H(+). It functions in the pathway purine metabolism; IMP biosynthesis via de novo pathway; 5-amino-1-(5-phospho-D-ribosyl)imidazole from N(2)-formyl-N(1)-(5-phospho-D-ribosyl)glycinamide: step 1/2. Its function is as follows. Part of the phosphoribosylformylglycinamidine synthase complex involved in the purines biosynthetic pathway. Catalyzes the ATP-dependent conversion of formylglycinamide ribonucleotide (FGAR) and glutamine to yield formylglycinamidine ribonucleotide (FGAM) and glutamate. The FGAM synthase complex is composed of three subunits. PurQ produces an ammonia molecule by converting glutamine to glutamate. PurL transfers the ammonia molecule to FGAR to form FGAM in an ATP-dependent manner. PurS interacts with PurQ and PurL and is thought to assist in the transfer of the ammonia molecule from PurQ to PurL. This Campylobacter hominis (strain ATCC BAA-381 / DSM 21671 / CCUG 45161 / LMG 19568 / NCTC 13146 / CH001A) protein is Phosphoribosylformylglycinamidine synthase subunit PurL.